The following is a 350-amino-acid chain: 2-oxoisovalerate dehydrogenase subunit beta (350 aa).

As to quaternary structure, heterodimer of an alpha and a beta chain. Thiamine diphosphate serves as cofactor.

It carries out the reaction N(6)-[(R)-lipoyl]-L-lysyl-[protein] + 3-methyl-2-oxobutanoate + H(+) = N(6)-[(R)-S(8)-2-methylpropanoyldihydrolipoyl]-L-lysyl-[protein] + CO2. Its function is as follows. The branched-chain alpha-keto dehydrogenase complex catalyzes the overall conversion of alpha-keto acids to acyl-CoA and CO(2). It contains multiple copies of three enzymatic components: branched-chain alpha-keto acid decarboxylase (E1), lipoamide acyltransferase (E2) and lipoamide dehydrogenase (E3). The sequence is that of 2-oxoisovalerate dehydrogenase subunit beta (bkdA2) from Pseudomonas aeruginosa (strain ATCC 15692 / DSM 22644 / CIP 104116 / JCM 14847 / LMG 12228 / 1C / PRS 101 / PAO1).